A 237-amino-acid chain; its full sequence is Zinc finger AN1 domain-containing stress-associated protein 14 (237 aa).

Residues Met1–Pro31 are disordered. An AN1-type zinc finger spans residues Gln171–Gly217. Positions 177, 180, 191, 193, 198, 201, 207, and 209 each coordinate Zn(2+).

In terms of biological role, may be involved in environmental stress response. The chain is Zinc finger AN1 domain-containing stress-associated protein 14 (SAP14) from Oryza sativa subsp. japonica (Rice).